We begin with the raw amino-acid sequence, 295 residues long: Undecaprenyl-diphosphatase (295 aa).

The next 7 membrane-spanning stretches (helical) occupy residues I12–V34, F50–W70, I95–H115, L120–F140, A209–P229, T243–M263, and W272–L292.

The protein belongs to the UppP family.

The protein localises to the cell inner membrane. The catalysed reaction is di-trans,octa-cis-undecaprenyl diphosphate + H2O = di-trans,octa-cis-undecaprenyl phosphate + phosphate + H(+). Catalyzes the dephosphorylation of undecaprenyl diphosphate (UPP). Confers resistance to bacitracin. The polypeptide is Undecaprenyl-diphosphatase (Granulibacter bethesdensis (strain ATCC BAA-1260 / CGDNIH1)).